Here is a 2161-residue protein sequence, read N- to C-terminus: Voltage-dependent L-type calcium channel subunit alpha-1D (2161 aa).

3 disordered regions span residues 1 to 21, 30 to 49, and 64 to 100; these read MMMM…ADHA, TRLP…SKQT, and KAAQ…SSNS. The Cytoplasmic segment spans residues 1-126; that stretch reads MMMMMMMKKM…RACISIVEWK (126 aa). Residues 38–49 are compositionally biased toward polar residues; the sequence is GPTSQPNSSKQT. Residues 82–93 are compositionally biased toward basic residues; sequence QRKRQQYAKSKK. One copy of the I repeat lies at 113 to 409; the sequence is NPIRRACISI…LVLGVLSGEF (297 aa). The chain crosses the membrane as a helical span at residues 127 to 145; it reads PFDIFILLAIFANCVALAI. The Extracellular segment spans residues 146 to 163; that stretch reads YIPFPEDDSNSTNHNLEK. Residue N155 is glycosylated (N-linked (GlcNAc...) asparagine). The helical transmembrane segment at 164 to 183 threads the bilayer; sequence VEYAFLIIFTVETFLKIIAY. Over 184–195 the chain is Cytoplasmic; that stretch reads GLLLHPNAYVRN. Residues 196–214 traverse the membrane as a helical segment; sequence GWNLLDFVIVIVGLFSVIL. The Extracellular segment spans residues 215 to 235; the sequence is EQLTKETEGGNHSSGKSGGFD. N-linked (GlcNAc...) asparagine glycosylation occurs at N225. Residues 236-254 traverse the membrane as a helical segment; it reads VKALRAFRVLRPLRLVSGV. The Cytoplasmic portion of the chain corresponds to 255-273; sequence PSLQVVLNSIIKAMVPLLH. Residues 274 to 293 traverse the membrane as a helical segment; the sequence is IALLVLFVIIIYAIIGLELF. Residues 294–381 are Extracellular-facing; it reads IGKMHKTCFF…WMNDAMGFEL (88 aa). N-linked (GlcNAc...) asparagine glycosylation is present at N329. E364 is a Ca(2+) binding site. Residues 382-406 traverse the membrane as a helical segment; that stretch reads PWVYFVSLVIFGSFFVLNLVLGVLS. Residues 407–523 lie on the Cytoplasmic side of the membrane; the sequence is GEFSKEREKA…RRCRAAVKSV (117 aa). The binding to the beta subunit stretch occupies residues 429–446; the sequence is QQLEEDLKGYLDWITQAE. The disordered stretch occupies residues 449 to 482; that stretch reads DPENEEEGGEEGKRNTSMPTSETESVNTENVSGE. Residues 463-479 show a composition bias toward polar residues; the sequence is NTSMPTSETESVNTENV. One copy of the II repeat lies at 509 to 755; that stretch reads NRFNRRRCRA…VFLAIAVDNL (247 aa). Residues 524-543 form a helical membrane-spanning segment; that stretch reads TFYWLVIVLVFLNTLTISSE. The Extracellular segment spans residues 544–558; the sequence is HYNQPDWLTQIQDIA. Residues 559–577 traverse the membrane as a helical segment; sequence NKVLLALFTCEMLVKMYSL. The Cytoplasmic segment spans residues 578 to 585; that stretch reads GLQAYFVS. A helical transmembrane segment spans residues 586 to 604; sequence LFNRFDCFVVCGGITETIL. The Extracellular segment spans residues 605 to 614; sequence VELEIMSPLG. A helical transmembrane segment spans residues 615–633; sequence ISVFRCVRLLRIFKVTRHW. Residues 634–652 are Cytoplasmic-facing; sequence TSLSNLVASLLNSMKSIAS. A helical membrane pass occupies residues 653 to 673; sequence LLLLLFLFIIIFSLLGMQLFG. Residues 674-727 are Extracellular-facing; that stretch reads GKFNFDETQTKRSTFDNFPQALLTVFQILTGEDWNAVMYDGIMAYGGPSSSGMI. E705 is a Ca(2+) binding site. The chain crosses the membrane as a helical span at residues 728-752; it reads VCIYFIILFICGNYILLNVFLAIAV. Topologically, residues 753-886 are cytoplasmic; that stretch reads DNLADAESLN…VGCHKLINHH (134 aa). Over residues 766-790 the composition is skewed to basic and acidic residues; the sequence is KEEAEEKERKKIARKESLENKKNNK. The tract at residues 766–850 is disordered; it reads KEEAEEKERK…AGPRPRRISE (85 aa). The segment covering 791–802 has biased composition (polar residues); the sequence is PEVNQIANSDNK. The segment covering 825 to 838 has biased composition (acidic residues); sequence VGEEEEEEEEDEPE. The III repeat unit spans residues 873-1155; sequence NPIRVGCHKL…IFVGFVIVTF (283 aa). A helical membrane pass occupies residues 887-905; the sequence is IFTNLILVFIMLSSAALAA. Residues 906-921 lie on the Extracellular side of the membrane; it reads EDPIRSHSFRNTILGY. The helical transmembrane segment at 922 to 941 threads the bilayer; sequence FDYAFTAIFTVEILLKMTTF. Residues 942-953 are Cytoplasmic-facing; it reads GAFLHKGAFCRN. Residues 954–972 form a helical membrane-spanning segment; that stretch reads YFNLLDMLVVGVSLVSFGI. At 973–978 the chain is on the extracellular side; that stretch reads QSSAIS. The helical transmembrane segment at 979–998 threads the bilayer; the sequence is VVKILRVLRVLRPLRAINRA. The Cytoplasmic segment spans residues 999 to 1017; sequence KGLKHVVQCVFVAIRTIGN. The helical transmembrane segment at 1018-1037 threads the bilayer; it reads IMIVTTLLQFMFACIGVQLF. Topologically, residues 1038–1127 are extracellular; sequence KGKFYRCTDE…IGPIYNHRVE (90 aa). The tract at residues 1075–1165 is dihydropyridine binding; it reads RIWQNSDFNF…QEQGEKEYKN (91 aa). E1101 is a binding site for Ca(2+). A helical membrane pass occupies residues 1128-1148; the sequence is ISIFFIIYIIIVAFFMMNIFV. The Cytoplasmic portion of the chain corresponds to 1149 to 1205; the sequence is GFVIVTFQEQGEKEYKNCELDKNQRQCVEYALKARPLRRYIPKNPYQYKFWYVVNSS. Residues 1192 to 1467 form an IV repeat; that stretch reads NPYQYKFWYV…LFVAVIMDNF (276 aa). The helical transmembrane segment at 1206–1224 threads the bilayer; it reads PFEYMMFVLIMLNTLCLAM. Residues 1225 to 1239 are Extracellular-facing; sequence QHYEQSKMFNDAMDI. Residues 1240–1259 traverse the membrane as a helical segment; sequence LNMVFTGVFTVEMVLKVIAF. The Cytoplasmic portion of the chain corresponds to 1260 to 1266; sequence KPKGYFS. A helical transmembrane segment spans residues 1267–1288; the sequence is DAWNTFDSLIVIGSIIDVALSE. Topologically, residues 1289–1313 are extracellular; that stretch reads ADPTESENVPVPTATPGNSEESNRI. Residues 1314–1333 traverse the membrane as a helical segment; the sequence is SITFFRLFRVMRLVKLLSRG. The Cytoplasmic portion of the chain corresponds to 1334–1352; the sequence is EGIRTLLWTFIKSFQALPY. A helical transmembrane segment spans residues 1353 to 1372; it reads VALLIAMLFFIYAVIGMQMF. Residues 1373–1439 lie on the Extracellular side of the membrane; the sequence is GKVAMRDNNQ…GEEYTCGSNF (67 aa). The interval 1420 to 1486 is dihydropyridine binding; it reads LCDPESDYNP…LGPHHLDEFK (67 aa). The phenylalkylamine binding stretch occupies residues 1432 to 1475; that stretch reads EYTCGSNFAIVYFISFYMLCAFLIINLFVAVIMDNFDYLTRDWS. Residues 1440 to 1464 traverse the membrane as a helical segment; it reads AIVYFISFYMLCAFLIINLFVAVIM. At 1465–2161 the chain is on the cytoplasmic side; that stretch reads DNFDYLTRDW…ADEMICITTL (697 aa). 4 disordered regions span residues 1659-1678, 1684-1804, 1872-1919, and 2108-2152; these read SCDL…EDDV, ALLG…VKRT, PGRN…ASHR, and NGNV…EDLA. A compositionally biased stretch (polar residues) spans 1745–1763; sequence SIGKQVPTSTNANLNNANM. A compositionally biased stretch (basic and acidic residues) spans 1779 to 1797; sequence HVSENGHHSSHKHDREPQR. The segment covering 2138-2152 has biased composition (acidic residues); it reads SDEEPDPGRDEEDLA.

This sequence belongs to the calcium channel alpha-1 subunit (TC 1.A.1.11) family. CACNA1D subfamily. As to quaternary structure, voltage-dependent calcium channels are multisubunit complexes, consisting of alpha-1, alpha-2, beta and delta subunits in a 1:1:1:1 ratio. The channel activity is directed by the pore-forming and voltage-sensitive alpha-1 subunit. In many cases, this subunit is sufficient to generate voltage-sensitive calcium channel activity. The auxiliary subunits beta and alpha-2/delta linked by a disulfide bridge regulate the channel activity. Channel activity is further modulated, depending on the presence of specific delta subunit isoforms. Interacts (via IQ domain) with CABP1 and CABP4 in a calcium independent manner. Interacts with RIMBP2. Expressed in pancreatic islets and in brain, where it has been seen in cerebral cortex, hippocampus, basal ganglia, habenula and thalamus. Expressed in the small cell lung carcinoma cell line SCC-9. No expression in skeletal muscle.

Its subcellular location is the membrane. It catalyses the reaction Ca(2+)(in) = Ca(2+)(out). Its function is as follows. Voltage-sensitive calcium channels (VSCC) mediate the entry of calcium ions into excitable cells and are also involved in a variety of calcium-dependent processes, including muscle contraction, hormone or neurotransmitter release, gene expression, cell motility, cell division and cell death. The isoform alpha-1D gives rise to L-type calcium currents. Long-lasting (L-type) calcium channels belong to the 'high-voltage activated' (HVA) group. They are blocked by dihydropyridines (DHP), phenylalkylamines, and by benzothiazepines. Functionally, voltage-sensitive calcium channels (VSCC) mediate the entry of calcium ions into excitable cells and are also involved in a variety of calcium-dependent processes, including muscle contraction, hormone or neurotransmitter release, gene expression, cell motility, cell division and cell death. The isoform alpha-1D gives rise to L-type calcium currents. In Homo sapiens (Human), this protein is Voltage-dependent L-type calcium channel subunit alpha-1D (CACNA1D).